The following is a 531-amino-acid chain: Putative aldehyde dehydrogenase family 7 member A1 homolog (531 aa).

Position 264-269 (264-269 (GSSEIG)) interacts with NAD(+). Glu-286 serves as the catalytic Proton acceptor. The active-site Nucleophile is Cys-320.

The protein belongs to the aldehyde dehydrogenase family. In terms of assembly, homotetramer.

The enzyme catalyses an aldehyde + NAD(+) + H2O = a carboxylate + NADH + 2 H(+). This is Putative aldehyde dehydrogenase family 7 member A1 homolog (alh-9) from Caenorhabditis elegans.